Reading from the N-terminus, the 2099-residue chain is Dedicator of cytokinesis protein 8 (2099 aa).

3 positions are modified to phosphoserine: serine 20, serine 139, and serine 451. In terms of domain architecture, C2 DOCK-type spans 560-729 (RNLLYVYPQR…GVFNIEVQAV (170 aa)). Phosphoserine occurs at positions 904, 936, 1145, and 1243. The 435-residue stretch at 1632-2066 (KSYQASPDLR…LRPMIERKIP (435 aa)) folds into the DOCKER domain. Serine 2087 carries the phosphoserine modification.

This sequence belongs to the DOCK family. As to quaternary structure, interacts (via DOCKER domain) with GTPase CDC42; the interaction activates CDC42 by exchanging GDP for GTP. The unphosphorylated form interacts (via DOCKER domain) with LRCH1 (via LRR repeats); the interaction prevents the association between DOCK8 and CDC42. Interacts with CCDC88B. Post-translationally, in response to chemokine CXCL12/SDF-1-alpha stimulation, phosphorylated by PRKCA/PKC-alpha which promotes DOCK8 dissociation from LRCH1. In terms of tissue distribution, expressed in peripheral blood mononuclear cells (PBMCs).

The protein localises to the cytoplasm. It is found in the cell membrane. It localises to the cell projection. Its subcellular location is the lamellipodium membrane. Its function is as follows. Guanine nucleotide exchange factor (GEF) which specifically activates small GTPase CDC42 by exchanging bound GDP for free GTP. During immune responses, required for interstitial dendritic cell (DC) migration by locally activating CDC42 at the leading edge membrane of DC. Required for CD4(+) T-cell migration in response to chemokine stimulation by promoting CDC42 activation at T cell leading edge membrane. Is involved in NK cell cytotoxicity by controlling polarization of microtubule-organizing center (MTOC), and possibly regulating CCDC88B-mediated lytic granule transport to MTOC during cell killing. The polypeptide is Dedicator of cytokinesis protein 8 (DOCK8) (Homo sapiens (Human)).